The following is a 130-amino-acid chain: Protein ApaG (130 aa).

The region spanning 3 to 127 is the ApaG domain; sequence RALTRDIEVT…FSLDSPGLVR (125 aa).

In Sinorhizobium fredii (strain NBRC 101917 / NGR234), this protein is Protein ApaG.